Reading from the N-terminus, the 182-residue chain is MCIGMDIRDFFAQSAGRWFSQRTSHHLAFKQTESGKSQLTIELLSVDDPAVIALCQQYDMDPAWAVCGARVSWDGTMEWDNEKHEGSTVLVPIMDQGSRMEGKLLREMGYAEKAPVAGRFSMGSDGALTLITEYETIYSEERLWFASPNLRLRTSILKRFGGFSMASFCSEIRLGVTQPANS.

Belongs to the CpcS/CpeS biliprotein lyase family.

Functionally, covalently attaches a chromophore to Cys residue(s) of phycobiliproteins. In Thermosynechococcus vestitus (strain NIES-2133 / IAM M-273 / BP-1), this protein is Chromophore lyase CpcS/CpeS.